Reading from the N-terminus, the 175-residue chain is ATP-dependent protease subunit HslV (175 aa).

T2 is an active-site residue. Residues A156, C159, and T162 each coordinate Na(+).

Belongs to the peptidase T1B family. HslV subfamily. As to quaternary structure, a double ring-shaped homohexamer of HslV is capped on each side by a ring-shaped HslU homohexamer. The assembly of the HslU/HslV complex is dependent on binding of ATP.

It localises to the cytoplasm. The catalysed reaction is ATP-dependent cleavage of peptide bonds with broad specificity.. With respect to regulation, allosterically activated by HslU binding. Protease subunit of a proteasome-like degradation complex believed to be a general protein degrading machinery. The sequence is that of ATP-dependent protease subunit HslV from Rhizobium johnstonii (strain DSM 114642 / LMG 32736 / 3841) (Rhizobium leguminosarum bv. viciae).